We begin with the raw amino-acid sequence, 186 residues long: Translation initiation factor IF-3 (186 aa).

Residues 1-20 form a disordered region; sequence MINRSAGKDRDRSRSGDKEL.

It belongs to the IF-3 family. As to quaternary structure, monomer.

Its subcellular location is the cytoplasm. In terms of biological role, IF-3 binds to the 30S ribosomal subunit and shifts the equilibrium between 70S ribosomes and their 50S and 30S subunits in favor of the free subunits, thus enhancing the availability of 30S subunits on which protein synthesis initiation begins. In Borrelia hermsii (strain HS1 / DAH), this protein is Translation initiation factor IF-3.